The chain runs to 172 residues: Type VI secretion system sheath protein TssB1 (172 aa).

As to quaternary structure, forms a heterodimer with TssC1. Heterodimers assemble to form the sheath of the T6SS machinery. Interacts with TagJ. Interacts with TssA1.

Core component of the H1 type VI (H1-T6SS) secretion system that plays a role in the release of toxins targeting both eukaryotic and prokaryotic species. Forms the sheath of the structure by assembling into tubules together with TssC1 resulting in the stacking of cogwheel-like structures showing predominantly a 12-fold symmetry. The sheath contracts to provide the energy needed for effector delivery. This chain is Type VI secretion system sheath protein TssB1, found in Pseudomonas aeruginosa (strain ATCC 15692 / DSM 22644 / CIP 104116 / JCM 14847 / LMG 12228 / 1C / PRS 101 / PAO1).